We begin with the raw amino-acid sequence, 294 residues long: MTADRPALRTGDRDTRLSFGSNLSSFTDYLRGHAPELLPENRIGHRSHSTRGGDGMESGDLAPHGTTIVALTYKGGVLLAGDRRATQGNLIASRDVEKVYVTDEYSAAGIAGTAGIAIELVRLFAVELEHYEKIEGVPLTFDGKANRLASMVRGNLGAAMQGLAVVPLLVGYDLDADDESRAGRIVSYDVVGGRYEERAGYHAVGSGSLFAKSALKKIYSPDSDEETALRAAIESLYDAADDDSATGGPDLTRGIYPTAVTITQAGAVHVSEETTSELARRIVAERTEQGGSAR.

A propeptide spans 1-65 (MTADRPALRT…MESGDLAPHG (65 aa)) (removed in mature form; by autocatalysis). Threonine 66 functions as the Nucleophile in the catalytic mechanism.

The protein belongs to the peptidase T1B family. The 20S proteasome core is composed of 14 alpha and 14 beta subunits that assemble into four stacked heptameric rings, resulting in a barrel-shaped structure. The two inner rings, each composed of seven catalytic beta subunits, are sandwiched by two outer rings, each composed of seven alpha subunits. All four combinations of alpha- and beta-subunits (beta2-alpha1, beta2-alpha2, beta1-alpha2 and beta1-alpha1) yield fully assembled and proteolytically active proteasomes. The catalytic chamber with the active sites is on the inside of the barrel. Has probably a gated structure, the ends of the cylinder being occluded by the N-termini of the alpha-subunits. Is likely capped by the proteasome-associated ATPase, ARC.

It is found in the cytoplasm. It catalyses the reaction Cleavage of peptide bonds with very broad specificity.. The protein operates within protein degradation; proteasomal Pup-dependent pathway. The formation of the proteasomal ATPase ARC-20S proteasome complex, likely via the docking of the C-termini of ARC into the intersubunit pockets in the alpha-rings, may trigger opening of the gate for substrate entry. Interconversion between the open-gate and close-gate conformations leads to a dynamic regulation of the 20S proteasome proteolysis activity. Component of the proteasome core, a large protease complex with broad specificity involved in protein degradation. The R.erythropolis proteasomes are able to cleave oligopeptides after Tyr, Phe and Leu, very poorly after Arg but not after Glu. Thus, displays chymotrypsin-like activity, low trypsin-like activity but no caspase-like activity. This is Proteasome subunit beta 1 from Rhodococcus erythropolis (Arthrobacter picolinophilus).